We begin with the raw amino-acid sequence, 65 residues long: Large ribosomal subunit protein bL35 (65 aa).

It belongs to the bacterial ribosomal protein bL35 family.

In Caldicellulosiruptor bescii (strain ATCC BAA-1888 / DSM 6725 / KCTC 15123 / Z-1320) (Anaerocellum thermophilum), this protein is Large ribosomal subunit protein bL35.